The primary structure comprises 526 residues: Phenylacetaldehyde oxime monooxygenase CYP71AN24 (526 aa).

A helical transmembrane segment spans residues 22–42 (SFNIFLVPILCLSIFILFSLT). Residue Cys465 participates in heme binding.

The protein belongs to the cytochrome P450 family. Heme is required as a cofactor. As to expression, expressed in seedlings and leaves.

The protein localises to the membrane. It carries out the reaction (E)-phenylacetaldehyde oxime + reduced [NADPH--hemoprotein reductase] + O2 = (R)-mandelonitrile + oxidized [NADPH--hemoprotein reductase] + 2 H2O + H(+). The enzyme catalyses phenylacetonitrile + reduced [NADPH--hemoprotein reductase] + O2 = (R)-mandelonitrile + oxidized [NADPH--hemoprotein reductase] + H2O + H(+). Functionally, involved in L-phenylalanine-derived cyanogenic glycoside biosynthesis, including prunasin and amygdalin defensive agents. Catalyzes the conversion of phenylacetaldoxime (PAOx) and phenylacetonitrile (PAN) into mandelonitrile (MAN). To a lower extent, can convert various aromatic aldoximes and nitriles; mediates the transformation of 4-hydroxyphenylacetaldoxime, 4-hydroxyphenylacetonitrile, indole-3-acetal-doxime and indole-3-acetonitrile into the corresponding hydroxynitriles, but cannot use the aliphatic compounds 2-methylpropanaloxime and 2-methylpropanenitrile as substrates. This chain is Phenylacetaldehyde oxime monooxygenase CYP71AN24, found in Prunus mume (Japanese apricot).